Reading from the N-terminus, the 178-residue chain is Inorganic pyrophosphatase (178 aa).

Substrate-binding residues include lysine 30, arginine 44, and tyrosine 56. Mg(2+) contacts are provided by aspartate 66, aspartate 71, and aspartate 103. Residue tyrosine 142 coordinates substrate.

The protein belongs to the PPase family. In terms of assembly, homohexamer. The cofactor is Mg(2+).

The protein resides in the cytoplasm. The catalysed reaction is diphosphate + H2O = 2 phosphate + H(+). Functionally, catalyzes the hydrolysis of inorganic pyrophosphate (PPi) forming two phosphate ions. The chain is Inorganic pyrophosphatase from Xylella fastidiosa (strain 9a5c).